A 388-amino-acid polypeptide reads, in one-letter code: L-arabinitol 4-dehydrogenase (388 aa).

Positions 55, 80, 81, 110, 113, 116, 124, and 165 each coordinate Zn(2+). NAD(+)-binding positions include 192–193, Asp213, Arg218, Ile293, and 317–319; these read PI and QYR.

It belongs to the zinc-containing alcohol dehydrogenase family. As to quaternary structure, homotetramer. Zn(2+) serves as cofactor.

The enzyme catalyses L-arabinitol + NAD(+) = L-xylulose + NADH + H(+). The protein operates within carbohydrate degradation; L-arabinose degradation via L-arabinitol; D-xylulose 5-phosphate from L-arabinose (fungal route): step 2/5. In terms of biological role, catalyzes the NAD-dependent oxidation of L-arabinitol to L-xylulose in the fungal L-arabinose catabolic pathway. L-arabinose catabolism is important for using plant material as a carbon source. NADP cannot act as a cosubstrate. This Talaromyces emersonii (Thermophilic fungus) protein is L-arabinitol 4-dehydrogenase (lad).